Reading from the N-terminus, the 119-residue chain is MIIGHGIDLQDIAAVQRAHERSSRFASKVLTFKELEIFTSLKGRRQVEYLAGRWAAKEAFSKAYGSGIGSLRFQDLEILANNKGAPIFTKSPFSGNIFISISHSKNYVEASVILEENNL.

Mg(2+)-binding residues include Asp8 and Glu58.

The protein belongs to the P-Pant transferase superfamily. AcpS family. Mg(2+) serves as cofactor.

Its subcellular location is the cytoplasm. The catalysed reaction is apo-[ACP] + CoA = holo-[ACP] + adenosine 3',5'-bisphosphate + H(+). Its function is as follows. Transfers the 4'-phosphopantetheine moiety from coenzyme A to a Ser of acyl-carrier-protein. This Streptococcus mutans serotype c (strain ATCC 700610 / UA159) protein is Holo-[acyl-carrier-protein] synthase.